The primary structure comprises 890 residues: Phosphotransferase RcsD (890 aa).

Topologically, residues 1–21 are cytoplasmic; that stretch reads MRQKETTATTRFSLLPGSITR. The chain crosses the membrane as a helical span at residues 22 to 42; the sequence is FFLLLIIVLLVTMGVMVQSAV. At 43 to 308 the chain is on the periplasmic side; that stretch reads NAWLKDKSYQ…GTLLLDTLQN (266 aa). The helical transmembrane segment at 309–329 threads the bilayer; that stretch reads ILLPLLLNIGLLALALFGYTT. The Cytoplasmic portion of the chain corresponds to 330-890; the sequence is FRHFSSRSTE…DIDSYVKSLL (561 aa). Residues 468 to 678 are histidine-like kinase; sequence NIGDALKEPA…RYSVHIKMLA (211 aa). The HPt domain maps to 803-890; it reads AQLHASGYYA…DIDSYVKSLL (88 aa). A Phosphohistidine modification is found at H842.

This sequence belongs to the RcsD family. Interacts with RcsC and RcsB. Has a higher affinity for RcsB than for RcsC. In terms of processing, phosphorylated by RcsC.

It localises to the cell inner membrane. Component of the Rcs signaling system, which controls transcription of numerous genes. RcsD is a phosphotransfer intermediate between the sensor kinase RcsC and the response regulator RcsB. It acquires a phosphoryl group from RcsC and transfers it to RcsB. The system controls expression of genes involved in colanic acid capsule synthesis, biofilm formation and cell division. This Escherichia coli (strain K12) protein is Phosphotransferase RcsD.